Here is a 252-residue protein sequence, read N- to C-terminus: Probable transcriptional regulatory protein Fnod_1106 (252 aa).

Belongs to the TACO1 family.

The protein resides in the cytoplasm. This chain is Probable transcriptional regulatory protein Fnod_1106, found in Fervidobacterium nodosum (strain ATCC 35602 / DSM 5306 / Rt17-B1).